The following is a 311-amino-acid chain: ADP-ribosyl cyclase/cyclic ADP-ribose hydrolase 2 (311 aa).

An N-terminal signal peptide occupies residues 1–24 (MAVQGGLLSLWLWLWLSLLTVLLG). 3 cysteine pairs are disulfide-bonded: C46/C60, C76/C156, and C137/C150. N59 and N88 each carry an N-linked (GlcNAc...) asparagine glycan. NAD(+) is bound at residue W102. Position 102 (W102) interacts with nicotinamide. N141 carries N-linked (GlcNAc...) asparagine glycosylation. Residue W165 participates in NAD(+) binding. N-linked (GlcNAc...) asparagine glycosylation occurs at N185. Residue E203 coordinates NAD(+). Cystine bridges form between C231–C252 and C264–C273. A lipid anchor (GPI-anchor amidated serine) is attached at S286. Residues 287 to 311 (ASLHAIGDASLLISLLVALASSSQA) constitute a propeptide that is removed on maturation.

The protein belongs to the ADP-ribosyl cyclase family. In terms of assembly, homodimer. Expressed in the bone marrow, spleen and thymus in lymphoid organs, and the lung, kidney and heart in non-lymphoid organs.

The protein localises to the cell membrane. The catalysed reaction is NAD(+) + H2O = ADP-D-ribose + nicotinamide + H(+). It catalyses the reaction NAD(+) = cyclic ADP-beta-D-ribose + nicotinamide + H(+). It carries out the reaction cyclic ADP-beta-D-ribose + H2O = ADP-D-ribose. Functionally, catalyzes both the synthesis of cyclic ADP-beta-D-ribose (cADPR) from NAD(+), and its hydrolysis to ADP-D-ribose (ADPR). Cyclic ADPR is known to serve as an endogenous second messenger that elicits calcium release from intracellular stores, and thus regulates the mobilization of intracellular calcium. May be involved in pre-B-cell growth. The polypeptide is ADP-ribosyl cyclase/cyclic ADP-ribose hydrolase 2 (Bst1) (Mus musculus (Mouse)).